Here is a 214-residue protein sequence, read N- to C-terminus: Probable transaldolase 1 (214 aa).

The active-site Schiff-base intermediate with substrate is Lys83.

Belongs to the transaldolase family. Type 3B subfamily.

The protein resides in the cytoplasm. It catalyses the reaction D-sedoheptulose 7-phosphate + D-glyceraldehyde 3-phosphate = D-erythrose 4-phosphate + beta-D-fructose 6-phosphate. Its pathway is carbohydrate degradation; pentose phosphate pathway; D-glyceraldehyde 3-phosphate and beta-D-fructose 6-phosphate from D-ribose 5-phosphate and D-xylulose 5-phosphate (non-oxidative stage): step 2/3. Transaldolase is important for the balance of metabolites in the pentose-phosphate pathway. This Listeria monocytogenes serotype 4b (strain F2365) protein is Probable transaldolase 1.